A 623-amino-acid chain; its full sequence is Membrane protein insertase YidC (623 aa).

A helical membrane pass occupies residues 8–28 (LILATGLSFLVIMVWFFLFPP). The interval 33 to 64 (TEGEPTVATQQTAVAPSATPDAPTTAVPPDAD) is disordered. Low complexity predominate over residues 44–62 (TAVAPSATPDAPTTAVPPD). Helical transmembrane passes span 379–399 (MGLA…PLAY), 449–469 (LPIL…FVTI), 507–527 (TTMA…SMWL), and 543–563 (IFAW…SGLV). The segment covering 601-617 (KPAAQPAGKAANDGAAP) has biased composition (low complexity). Residues 601 to 623 (KPAAQPAGKAANDGAAPAKKRKP) are disordered.

This sequence belongs to the OXA1/ALB3/YidC family. Type 1 subfamily. Interacts with the Sec translocase complex via SecD. Specifically interacts with transmembrane segments of nascent integral membrane proteins during membrane integration.

The protein localises to the cell inner membrane. Its function is as follows. Required for the insertion and/or proper folding and/or complex formation of integral membrane proteins into the membrane. Involved in integration of membrane proteins that insert both dependently and independently of the Sec translocase complex, as well as at least some lipoproteins. Aids folding of multispanning membrane proteins. The sequence is that of Membrane protein insertase YidC from Cereibacter sphaeroides (strain KD131 / KCTC 12085) (Rhodobacter sphaeroides).